Consider the following 281-residue polypeptide: Protein NipSnap homolog 2 (281 aa).

Residues 1–27 constitute a mitochondrion transit peptide; that stretch reads MAARVLLARGGLLRPAAQSAFLPGLRT.

The protein belongs to the NipSnap family. Interacts with CALCOCO2/NDP52, NBR1, SQSTM1/p62, TAX1BP1 and WDFY3/ALFY. Interacts with ATG8 family proteins (MAP1LC3A, MAP1LC3B, MAP1LC3C, GABARAP, GABARAPL1 and GABARAPL2). Interacts with VDAC1.

The protein localises to the mitochondrion matrix. It localises to the cytoplasm. Its function is as follows. Protein involved in mitophagy by facilitating recruitment of the autophagy machinery required for clearance of damaged mitochondria. Accumulates on the mitochondria surface in response to mitochondrial depolarization and acts as a 'eat me' signal by recruiting proteins involved in selective autophagy, such as autophagy receptors (CALCOCO2/NDP52, NBR1, SQSTM1/p62, TAX1BP1 and WDFY3/ALFY) and ATG8 family proteins (MAP1LC3A, MAP1LC3B, MAP1LC3C, GABARAP, GABARAPL1 and GABARAPL2). May act as a positive regulator of L-type calcium channels. This chain is Protein NipSnap homolog 2, found in Mus musculus (Mouse).